The chain runs to 339 residues: Glycerol-3-phosphate dehydrogenase [NAD(P)+] (339 aa).

Positions 15, 16, 36, and 110 each coordinate NADPH. Sn-glycerol 3-phosphate is bound by residues K110, G139, and T141. Residue A143 coordinates NADPH. The sn-glycerol 3-phosphate site is built by K195, D248, S258, R259, and N260. Catalysis depends on K195, which acts as the Proton acceptor. Position 259 (R259) interacts with NADPH. Positions 283 and 285 each coordinate NADPH.

Belongs to the NAD-dependent glycerol-3-phosphate dehydrogenase family.

The protein localises to the cytoplasm. It catalyses the reaction sn-glycerol 3-phosphate + NAD(+) = dihydroxyacetone phosphate + NADH + H(+). It carries out the reaction sn-glycerol 3-phosphate + NADP(+) = dihydroxyacetone phosphate + NADPH + H(+). The protein operates within membrane lipid metabolism; glycerophospholipid metabolism. Functionally, catalyzes the reduction of the glycolytic intermediate dihydroxyacetone phosphate (DHAP) to sn-glycerol 3-phosphate (G3P), the key precursor for phospholipid synthesis. This Klebsiella pneumoniae (strain 342) protein is Glycerol-3-phosphate dehydrogenase [NAD(P)+].